Consider the following 942-residue polypeptide: Isoleucine--tRNA ligase (942 aa).

The short motif at 58 to 68 is the 'HIGH' region element; it reads PYANGDIHLGH. E567 is a binding site for L-isoleucyl-5'-AMP. Positions 608 to 612 match the 'KMSKS' region motif; sequence KMSKS. K611 serves as a coordination point for ATP. The Zn(2+) site is built by C905, C908, C925, and C928.

Belongs to the class-I aminoacyl-tRNA synthetase family. IleS type 1 subfamily. Monomer. It depends on Zn(2+) as a cofactor.

Its subcellular location is the cytoplasm. It carries out the reaction tRNA(Ile) + L-isoleucine + ATP = L-isoleucyl-tRNA(Ile) + AMP + diphosphate. Its function is as follows. Catalyzes the attachment of isoleucine to tRNA(Ile). As IleRS can inadvertently accommodate and process structurally similar amino acids such as valine, to avoid such errors it has two additional distinct tRNA(Ile)-dependent editing activities. One activity is designated as 'pretransfer' editing and involves the hydrolysis of activated Val-AMP. The other activity is designated 'posttransfer' editing and involves deacylation of mischarged Val-tRNA(Ile). This is Isoleucine--tRNA ligase from Pseudoalteromonas translucida (strain TAC 125).